A 202-amino-acid chain; its full sequence is Protein GrpE (202 aa).

Positions 21–37 (EELKNEEVKEETHEHEH) are enriched in basic and acidic residues. The disordered stretch occupies residues 21 to 52 (EELKNEEVKEETHEHEHKHGGHTCCGKHGHKH). A compositionally biased stretch (basic residues) spans 38 to 51 (KHGGHTCCGKHGHK).

Belongs to the GrpE family. As to quaternary structure, homodimer.

It is found in the cytoplasm. Functionally, participates actively in the response to hyperosmotic and heat shock by preventing the aggregation of stress-denatured proteins, in association with DnaK and GrpE. It is the nucleotide exchange factor for DnaK and may function as a thermosensor. Unfolded proteins bind initially to DnaJ; upon interaction with the DnaJ-bound protein, DnaK hydrolyzes its bound ATP, resulting in the formation of a stable complex. GrpE releases ADP from DnaK; ATP binding to DnaK triggers the release of the substrate protein, thus completing the reaction cycle. Several rounds of ATP-dependent interactions between DnaJ, DnaK and GrpE are required for fully efficient folding. This Fusobacterium nucleatum subsp. polymorphum (Fusobacterium polymorphum) protein is Protein GrpE.